We begin with the raw amino-acid sequence, 527 residues long: DUF21 domain-containing protein At1g47330 (527 aa).

Residues 1–15 (MSSDIPCCGTTFSLY) are Extracellular-facing. Residues 8-191 (CGTTFSLYVV…GKGGDLTTDE (184 aa)) enclose the CNNM transmembrane domain. The chain crosses the membrane as a helical span at residues 16 to 36 (VVIIIALVAFAGLMAGLTLGL). The Cytoplasmic segment spans residues 37–70 (MSLGLVDLEVLIKSGRPQDRINAGKIFPVVKNQH). A helical transmembrane segment spans residues 71–91 (LLLCTLLIGNSMAMEALPIFL). The Extracellular portion of the chain corresponds to 92–93 (DK). A helical membrane pass occupies residues 94 to 114 (IVPPWLAILLSVTLILVFGEI). Over 115–126 (MPQAVCTRYGLK) the chain is Cytoplasmic. A helical membrane pass occupies residues 127-147 (VGAIMAPFVRVLLVLFFPISY). Over 148 to 527 (PISKVLDWML…PKHEESTQTL (380 aa)) the chain is Extracellular. CBS domains are found at residues 210-271 (MTPI…EVPL), 274-334 (MSMR…TKDE), and 366-435 (KSEN…ILDE). 3 disordered regions span residues 307–335 (KDLD…KDEL), 358–384 (ETGD…LLAA), and 464–527 (ITQS…TQTL). Serine 315 is modified (phosphoserine). The segment covering 358-369 (ETGDAKSGKSEN) has biased composition (basic and acidic residues). Positions 464-501 (ITQSSSGSTSPNQTSHMATPDSSPTTKPSNSSPTRKPS) are enriched in low complexity. An N-linked (GlcNAc...) asparagine glycan is attached at asparagine 475. Residues 502–515 (VSSPTREPSDSSHS) show a composition bias toward polar residues. Basic and acidic residues predominate over residues 518–527 (PKHEESTQTL).

It localises to the membrane. This chain is DUF21 domain-containing protein At1g47330 (CBSDUF7), found in Arabidopsis thaliana (Mouse-ear cress).